Reading from the N-terminus, the 585-residue chain is MVVPDSGSDIQPADNGDTDKVMSNSEPELDPNLTTVELEEVRKLQDLVRQLEVQNQTLHNRSRKQVLGGTNNSNLKAGSNINNLHKVMDTSPGAEEAGNLELSPPADSSGSEDMSPLPDTSRVEEQDGFLSLPCSSGSKQTMGWFVTSNCDSGMLGASEASKDQSALDEVDVLDLELCAKAEDEDSWLYVSPKKEVVIEHGPESPLKWCRKVLDHPSPATEVACRTLINRLDQSSRWKNVYSSPSQTSEAGVSASSSAGYLKSTNKTLLTSGSSGYMGVYSALSSQSSVDSELSSDESISMGYKLQDLTDVQIMARLQEESLRQDYASTSASRRSSSASLQSLRRGTYSDQEFDSYSQEDEEDECCSLPQHLQRYSPSPHSSPRCLSPSTLAEYNRLSAPRPRLSRCSLAGGGAKSEEELRHSMPNLTPRTSLRSLEAVRNSRSMEANLQSSGNRTSCLPHSPKGASSSRMRSDGQSPLYLRAPMKALSPVGSMSALRQHAKGPPSAQVGHTEAMRRVQSPGSKNGVGYSGCRTAVVTRQTPGRGMTPASPSSRTRLPQTPRSRSLGMTKPSGHLTDESWKDGCY.

5 disordered regions span residues 1–34 (MVVP…PNLT), 55–125 (NQTL…RVEE), 324–365 (QDYA…EDEC), 402–476 (PRLS…SDGQ), and 492–585 (GSMS…DGCY). The span at 68 to 83 (GGTNNSNLKAGSNINN) shows a compositional bias: polar residues. Low complexity predominate over residues 327-345 (ASTSASRRSSSASLQSLRR). Residues 351 to 365 (QEFDSYSQEDEEDEC) are compositionally biased toward acidic residues. Polar residues-rich tracts occupy residues 425-434 (PNLTPRTSLR), 441-476 (NSRS…SDGQ), and 549-563 (ASPS…TPRS). The segment covering 575 to 585 (LTDESWKDGCY) has biased composition (basic and acidic residues).

The protein belongs to the SLAIN motif-containing family.

This is SLAIN motif-containing protein-like from Danio rerio (Zebrafish).